Here is a 433-residue protein sequence, read N- to C-terminus: Histidine--tRNA ligase (433 aa).

This sequence belongs to the class-II aminoacyl-tRNA synthetase family. In terms of assembly, homodimer.

It is found in the cytoplasm. It catalyses the reaction tRNA(His) + L-histidine + ATP = L-histidyl-tRNA(His) + AMP + diphosphate + H(+). The chain is Histidine--tRNA ligase from Crocosphaera subtropica (strain ATCC 51142 / BH68) (Cyanothece sp. (strain ATCC 51142)).